The following is a 211-amino-acid chain: Thymidylate kinase (211 aa).

10–17 is an ATP binding site; it reads GGDGVGKS.

This sequence belongs to the thymidylate kinase family.

The enzyme catalyses dTMP + ATP = dTDP + ADP. Its function is as follows. Phosphorylation of dTMP to form dTDP in both de novo and salvage pathways of dTTP synthesis. The protein is Thymidylate kinase of Clavibacter michiganensis subsp. michiganensis (strain NCPPB 382).